The primary structure comprises 483 residues: GTPase Der (483 aa).

EngA-type G domains are found at residues 3–167 (FTLA…GEER) and 212–387 (LRIA…EIWN). Residues 9–16 (GRPNVGKS), 56–60 (DTAGL), 119–122 (NKAE), 218–225 (GRPNAGKS), 265–269 (DTAGM), and 330–333 (NKWD) contribute to the GTP site. In terms of domain architecture, KH-like spans 388-472 (RRISTGRLNR…PIRLSLRTSD (85 aa)).

The protein belongs to the TRAFAC class TrmE-Era-EngA-EngB-Septin-like GTPase superfamily. EngA (Der) GTPase family. In terms of assembly, associates with the 50S ribosomal subunit.

GTPase that plays an essential role in the late steps of ribosome biogenesis. This is GTPase Der from Brucella suis biovar 1 (strain 1330).